The primary structure comprises 216 residues: GTP cyclohydrolase 1 (216 aa).

The interval M1–E33 is disordered. Residues P24–E33 show a composition bias toward low complexity. C102, H105, and C173 together coordinate Zn(2+).

The protein belongs to the GTP cyclohydrolase I family. In terms of assembly, toroid-shaped homodecamer, composed of two pentamers of five dimers.

The catalysed reaction is GTP + H2O = 7,8-dihydroneopterin 3'-triphosphate + formate + H(+). It participates in cofactor biosynthesis; 7,8-dihydroneopterin triphosphate biosynthesis; 7,8-dihydroneopterin triphosphate from GTP: step 1/1. This is GTP cyclohydrolase 1 (folE) from Deinococcus radiodurans (strain ATCC 13939 / DSM 20539 / JCM 16871 / CCUG 27074 / LMG 4051 / NBRC 15346 / NCIMB 9279 / VKM B-1422 / R1).